A 492-amino-acid polypeptide reads, in one-letter code: 2-succinylbenzoate--CoA ligase (492 aa).

This sequence belongs to the ATP-dependent AMP-binding enzyme family. MenE subfamily.

The catalysed reaction is 2-succinylbenzoate + ATP + CoA = 2-succinylbenzoyl-CoA + AMP + diphosphate. It functions in the pathway quinol/quinone metabolism; 1,4-dihydroxy-2-naphthoate biosynthesis; 1,4-dihydroxy-2-naphthoate from chorismate: step 5/7. It participates in quinol/quinone metabolism; menaquinone biosynthesis. In terms of biological role, converts 2-succinylbenzoate (OSB) to 2-succinylbenzoyl-CoA (OSB-CoA). This Staphylococcus aureus (strain Mu3 / ATCC 700698) protein is 2-succinylbenzoate--CoA ligase.